The primary structure comprises 874 residues: Chaperone protein ClpB 1 (874 aa).

In terms of domain architecture, Clp R spans 6 to 148 (PNQFTEKAWE…RQIIQQIRGS (143 aa)). Repeat regions lie at residues 9 to 73 (FTEK…IARQ) and 85 to 148 (LGRS…IRGS). Residues 161–342 (EALEKYGRDL…RRFQQVFVDQ (182 aa)) are NBD1. 208 to 215 (GEPGVGKT) provides a ligand contact to ATP. Residues 343-551 (PTVEDTISIL…IAEIISKWTG (209 aa)) form a linker region. Positions 393–527 (IDLVDESAAR…MEGGLATTHT (135 aa)) form a coiled coil. The tract at residues 561 to 772 (EMQKLLNLDE…RVDETIIFHS (212 aa)) is NBD2. 611-618 (GPTGVGKT) is a binding site for ATP. Residues 773–874 (LRKDQLQQIV…IATPTAVPLS (102 aa)) are C-terminal.

It belongs to the ClpA/ClpB family. Homohexamer. The oligomerization is ATP-dependent.

It localises to the cytoplasm. Part of a stress-induced multi-chaperone system, it is involved in the recovery of the cell from heat-induced damage, in cooperation with DnaK, DnaJ and GrpE. Acts before DnaK, in the processing of protein aggregates. Protein binding stimulates the ATPase activity; ATP hydrolysis unfolds the denatured protein aggregates, which probably helps expose new hydrophobic binding sites on the surface of ClpB-bound aggregates, contributing to the solubilization and refolding of denatured protein aggregates by DnaK. Necessary for thermotolerance. This Synechococcus elongatus (strain ATCC 33912 / PCC 7942 / FACHB-805) (Anacystis nidulans R2) protein is Chaperone protein ClpB 1 (clpB1).